The sequence spans 179 residues: Protein TIFY 11a (179 aa).

The region spanning 62 to 97 (VDGGGQQFTIFYAGKVVVIDRCTPAMAAELMRFASA) is the Tify domain. The Jas signature appears at 115-140 (PIARKASLKRFLAKRKATPASARSSY). Positions 117–124 (ARKASLKR) match the Nuclear localization signal motif.

This sequence belongs to the TIFY/JAZ family. In terms of assembly, interacts with BHLH148. Interacts with COI1A in a coronatine-dependent manner. Interacts with COI1B in a coronatine-dependent manner. Coronatine is an analog of jasmonoyl isoleucine (JA-Ile). Interacts with RSS3. Forms a ternary complex with RSS3 and BHLH094 in the nucleus. Interacts with BHLH062 and NINJA1. Interacts with MYB30. In terms of processing, ubiquitinated. Targeted for degradation by the SCF(COI1) E3 ubiquitin ligase-proteasome pathway during jasmonate signaling.

The protein localises to the nucleus. In terms of biological role, repressor of jasmonate (JA) responses. Forms a ternary complex with RSS3 and BHLH94 to negatively regulate JA-responsive genes. Acts as a positive regulator of tolerance to salt stress. Involved in salt tolerance by modulating potassium homeostasis through JA signaling and regulation of the expression of potassium ion transporter genes. Acts as a transcriptional regulator targeted by the SCF(COI1) E3 ubiquitin ligase complexes in the JA signaling pathway, and interacts with BHLH062 that may directly regulate the ion transporter genes. Acts as a positive regulator of tolerance to dehydration stress. Acts as a negative regulator of tolerance to cold stress by interacting with MYB30. This Oryza sativa subsp. japonica (Rice) protein is Protein TIFY 11a.